A 574-amino-acid chain; its full sequence is MGGLEKKKYERGSATNYITRNKARKKLQLSLPDFRRLCILKGIYPHEPKHKKKVNKGSTAPRTFYLLKDIKFLLHEPIVGKFREYKVFVRRLRKAYGKREWDSVDRIRDNKPSYKLDHIIKERYPTFIDAVRDLDDALSMCFLFSTFPRTGKCHVQTIQLCRRLSVEFLNYVIDSRSLRKVFLSIKGIYYQADILGQTLTWITPYAFSHDHPTDVDYRVMATFTEFYTTLLGFVNFHLYQTLNLQYPPKLDSFSEVDLKSDGEDKYALETEVYMEKLAALSASLSRVIPSEPNDDTEVDEFPADPENAGLEEEQKRQLQEEEKHKSLFVGLKFFLNREVPRDALAFIIRSFGGEVSWDASVCIGATYNSTDPSITHHIVDRPSIQTQIINRYYLQPQWVFDCVNARLLLPVEDYFPGVLLPPHLSPFVHEKEGDYIPPEKLRLMAMQKGENLGLDEEDDDDDDDDEEEDDDDDEEEEDKKLRQLENKKVGQKNLNVKVTAGKVKVEDRTQVAEQEKNEEKRLAIMMMKKKEKYLYNKIMFGKKRKVREANKLALKRKAHDEAVKVERKKKAKKH.

The disordered stretch occupies residues 289 to 312; that stretch reads PSEPNDDTEVDEFPADPENAGLEE. Residues 292–303 show a composition bias toward acidic residues; that stretch reads PNDDTEVDEFPA. The BRCT domain maps to 323–416; sequence KHKSLFVGLK…LLLPVEDYFP (94 aa). The interval 452–486 is disordered; sequence LGLDEEDDDDDDDDEEEDDDDDEEEEDKKLRQLEN. Residues 453–477 are compositionally biased toward acidic residues; it reads GLDEEDDDDDDDDEEEDDDDDEEEE.

This sequence belongs to the pescadillo family. Component of the PeBoW complex, composed of bop1, pes1 and wdr12. The complex is held together by bop1, which interacts with pes1 via its N-terminal domain and with wdr12 via a high-affinity interaction between the seven-bladed beta-propeller domains of the 2 proteins. The PeBoW complex associates with the 66S pre-ribosome.

It is found in the nucleus. The protein localises to the nucleolus. It localises to the nucleoplasm. Functionally, component of the PeBoW complex, which is required for maturation of 28S and 5.8S ribosomal RNAs and formation of the 60S ribosome. Required for neural crest migration and eye development. The protein is Pescadillo homolog (pes1) of Xenopus laevis (African clawed frog).